A 30-amino-acid polypeptide reads, in one-letter code: Cyclotide cycloviolacin O17 (30 aa).

The cyclopeptide (Gly-Asn) cross-link spans 1-30 (GIPCGESCVWIPCISAAIGCSCKNKVCYRN). Intrachain disulfides connect cysteine 4/cysteine 20, cysteine 8/cysteine 22, and cysteine 13/cysteine 27.

Post-translationally, this is a cyclic peptide.

In terms of biological role, probably participates in a plant defense mechanism. The polypeptide is Cyclotide cycloviolacin O17 (Psychotria brachyceras).